Reading from the N-terminus, the 253-residue chain is Vitamin B12 import ATP-binding protein BtuD (253 aa).

The ABC transporter domain maps to 1–236; that stretch reads MTNQLMALNQ…NTLSRVFAAD (236 aa). 34–41 is an ATP binding site; sequence GPNGSGKS.

Belongs to the ABC transporter superfamily. Vitamin B12 importer (TC 3.A.1.13.1) family. As to quaternary structure, the complex is composed of two ATP-binding proteins (BtuD), two transmembrane proteins (BtuC) and a solute-binding protein (BtuF).

The protein localises to the cell inner membrane. The enzyme catalyses an R-cob(III)alamin(out) + ATP + H2O = an R-cob(III)alamin(in) + ADP + phosphate + H(+). Its function is as follows. Part of the ABC transporter complex BtuCDF involved in vitamin B12 import. Responsible for energy coupling to the transport system. The chain is Vitamin B12 import ATP-binding protein BtuD from Photorhabdus laumondii subsp. laumondii (strain DSM 15139 / CIP 105565 / TT01) (Photorhabdus luminescens subsp. laumondii).